The primary structure comprises 247 residues: tRNA pseudouridine synthase A (247 aa).

D58 serves as the catalytic Nucleophile. Y116 contributes to the substrate binding site.

It belongs to the tRNA pseudouridine synthase TruA family. As to quaternary structure, homodimer.

It catalyses the reaction uridine(38/39/40) in tRNA = pseudouridine(38/39/40) in tRNA. Formation of pseudouridine at positions 38, 39 and 40 in the anticodon stem and loop of transfer RNAs. This Hydrogenobaculum sp. (strain Y04AAS1) protein is tRNA pseudouridine synthase A.